Here is a 302-residue protein sequence, read N- to C-terminus: tRNA pseudouridine synthase B (302 aa).

Residue aspartate 45 is the Nucleophile of the active site.

Belongs to the pseudouridine synthase TruB family. Type 1 subfamily.

The enzyme catalyses uridine(55) in tRNA = pseudouridine(55) in tRNA. Responsible for synthesis of pseudouridine from uracil-55 in the psi GC loop of transfer RNAs. The polypeptide is tRNA pseudouridine synthase B (Francisella tularensis subsp. holarctica (strain FTNF002-00 / FTA)).